A 247-amino-acid polypeptide reads, in one-letter code: MSATSTIDPAEVAKFEAMAAEWWNPHGKFKPLHQMNPCRLDYITEQIAAEFDRDLSAPLPFQGLRLLDIGCGGGLLSEPMARLGADVVGADAAPRNIPVARLHAEQSGLTIDYRNTTAEDLAAAGERFDVVLNMEVVEHVADPLAYLTACRELLKPGGLMVCSTLNRNPKSFAMAIVGAEWIMRWLPKGTHDWSKFITPDELYDLIRKAGLDPVDRKGMVFNPVSWSWSLSDRDLSVNYVTASVRPR.

4 residues coordinate S-adenosyl-L-methionine: arginine 39, glycine 70, aspartate 91, and methionine 134.

Belongs to the methyltransferase superfamily. UbiG/COQ3 family.

It catalyses the reaction a 3-demethylubiquinol + S-adenosyl-L-methionine = a ubiquinol + S-adenosyl-L-homocysteine + H(+). The enzyme catalyses a 3-(all-trans-polyprenyl)benzene-1,2-diol + S-adenosyl-L-methionine = a 2-methoxy-6-(all-trans-polyprenyl)phenol + S-adenosyl-L-homocysteine + H(+). It participates in cofactor biosynthesis; ubiquinone biosynthesis. In terms of biological role, O-methyltransferase that catalyzes the 2 O-methylation steps in the ubiquinone biosynthetic pathway. This Cereibacter sphaeroides (strain ATCC 17025 / ATH 2.4.3) (Rhodobacter sphaeroides) protein is Ubiquinone biosynthesis O-methyltransferase.